The primary structure comprises 298 residues: GTP cyclohydrolase FolE2 (298 aa).

It belongs to the GTP cyclohydrolase IV family.

It carries out the reaction GTP + H2O = 7,8-dihydroneopterin 3'-triphosphate + formate + H(+). The protein operates within cofactor biosynthesis; 7,8-dihydroneopterin triphosphate biosynthesis; 7,8-dihydroneopterin triphosphate from GTP: step 1/1. In terms of biological role, converts GTP to 7,8-dihydroneopterin triphosphate. The protein is GTP cyclohydrolase FolE2 of Pseudomonas aeruginosa (strain LESB58).